Consider the following 165-residue polypeptide: Chorismate pyruvate-lyase (165 aa).

4 residues coordinate substrate: Met35, Arg77, Leu115, and Glu156.

Belongs to the UbiC family. Monomer.

The protein localises to the cytoplasm. The catalysed reaction is chorismate = 4-hydroxybenzoate + pyruvate. The protein operates within cofactor biosynthesis; ubiquinone biosynthesis. In terms of biological role, removes the pyruvyl group from chorismate, with concomitant aromatization of the ring, to provide 4-hydroxybenzoate (4HB) for the ubiquinone pathway. The protein is Chorismate pyruvate-lyase of Salmonella gallinarum (strain 287/91 / NCTC 13346).